The sequence spans 524 residues: Probable pectinesterase/pectinesterase inhibitor 42 (524 aa).

The signal sequence occupies residues 1 to 22 (MLVKVFSFFILMITMVVIGVSK). The pectinesterase inhibitor 42 stretch occupies residues 23–172 (EYCDDKHSCQ…ISKAKVALAL (150 aa)). The tract at residues 215-510 (DVVVAKDGTG…FTVAKLLDGE (296 aa)) is pectinesterase 42. Residues Asn265 and Asn281 are each glycosylated (N-linked (GlcNAc...) asparagine). Thr290 contributes to the substrate binding site. Asp343 serves as the catalytic Proton donor; for pectinesterase activity. Residues Cys357 and Cys377 are joined by a disulfide bond. Asp364 serves as the catalytic Nucleophile; for pectinesterase activity. Residue Asn412 is glycosylated (N-linked (GlcNAc...) asparagine). Arg430 and Trp432 together coordinate substrate.

It in the N-terminal section; belongs to the PMEI family. This sequence in the C-terminal section; belongs to the pectinesterase family. Expressed in siliques but not in flower buds.

It is found in the secreted. It localises to the cell wall. It carries out the reaction [(1-&gt;4)-alpha-D-galacturonosyl methyl ester](n) + n H2O = [(1-&gt;4)-alpha-D-galacturonosyl](n) + n methanol + n H(+). Its pathway is glycan metabolism; pectin degradation; 2-dehydro-3-deoxy-D-gluconate from pectin: step 1/5. Acts in the modification of cell walls via demethylesterification of cell wall pectin. The protein is Probable pectinesterase/pectinesterase inhibitor 42 (PME42) of Arabidopsis thaliana (Mouse-ear cress).